We begin with the raw amino-acid sequence, 381 residues long: 1-deoxy-D-xylulose 5-phosphate reductoisomerase (381 aa).

T10, G11, S12, I13, N38, and N121 together coordinate NADPH. Residue K122 coordinates 1-deoxy-D-xylulose 5-phosphate. E123 contacts NADPH. D147 provides a ligand contact to Mn(2+). Positions 148, 149, 173, and 196 each coordinate 1-deoxy-D-xylulose 5-phosphate. E149 is a Mn(2+) binding site. G202 serves as a coordination point for NADPH. 1-deoxy-D-xylulose 5-phosphate-binding residues include S209, N214, K215, and E218. A Mn(2+)-binding site is contributed by E218.

Belongs to the DXR family. It depends on Mg(2+) as a cofactor. Mn(2+) serves as cofactor.

It catalyses the reaction 2-C-methyl-D-erythritol 4-phosphate + NADP(+) = 1-deoxy-D-xylulose 5-phosphate + NADPH + H(+). It participates in isoprenoid biosynthesis; isopentenyl diphosphate biosynthesis via DXP pathway; isopentenyl diphosphate from 1-deoxy-D-xylulose 5-phosphate: step 1/6. Catalyzes the NADPH-dependent rearrangement and reduction of 1-deoxy-D-xylulose-5-phosphate (DXP) to 2-C-methyl-D-erythritol 4-phosphate (MEP). This is 1-deoxy-D-xylulose 5-phosphate reductoisomerase from Alkaliphilus oremlandii (strain OhILAs) (Clostridium oremlandii (strain OhILAs)).